The chain runs to 211 residues: LexA repressor (211 aa).

The segment at residues 27-47 is a DNA-binding region (H-T-H motif); the sequence is QTEIARAFGFKGVRAVQHHLD. Residues serine 131 and lysine 168 each act as for autocatalytic cleavage activity in the active site.

Belongs to the peptidase S24 family. As to quaternary structure, homodimer.

It carries out the reaction Hydrolysis of Ala-|-Gly bond in repressor LexA.. Functionally, represses a number of genes involved in the response to DNA damage (SOS response), including recA and lexA. In the presence of single-stranded DNA, RecA interacts with LexA causing an autocatalytic cleavage which disrupts the DNA-binding part of LexA, leading to derepression of the SOS regulon and eventually DNA repair. The sequence is that of LexA repressor from Xylella fastidiosa (strain M23).